We begin with the raw amino-acid sequence, 274 residues long: Probable glycerophosphodiester phosphodiesterase 1 (274 aa).

The region spanning 12–264 is the GP-PDE domain; sequence PFVVAHRGAS…HHPGRTKAWL (253 aa). H17 (proton acceptor) is an active-site residue. Residues E44 and D46 each contribute to the Ca(2+) site. The active-site Proton donor is H59. Ca(2+) is bound at residue E126.

Belongs to the glycerophosphoryl diester phosphodiesterase family. Ca(2+) is required as a cofactor.

The catalysed reaction is a sn-glycero-3-phosphodiester + H2O = an alcohol + sn-glycerol 3-phosphate + H(+). Functionally, glycerophosphodiester phosphodiesterase hydrolyzes glycerophosphodiesters into glycerol-3-phosphate (G3P) and the corresponding alcohol. This chain is Probable glycerophosphodiester phosphodiesterase 1 (glpQ1), found in Mycobacterium tuberculosis (strain CDC 1551 / Oshkosh).